Reading from the N-terminus, the 214-residue chain is Scytalone dehydratase-like protein mdpB (214 aa).

Substrate is bound by residues tyrosine 40 and tyrosine 60. Catalysis depends on residues histidine 95 and histidine 120.

Belongs to the scytalone dehydratase family.

Its pathway is secondary metabolite biosynthesis. Its function is as follows. Scytalone dehydratase-like protein; part of the gene cluster that mediates the biosynthesis of monodictyphenone, a prenyl xanthone derivative. The pathway begins with the synthesis of atrochrysone thioester by the polyketide synthase (PKS) mdpG. The atrochrysone carboxyl ACP thioesterase mdpF then breaks the thioester bond and releases the atrochrysone carboxylic acid from mdpG. The atrochrysone carboxylic acid is then converted to atrochrysone which is further transformed into emodin anthrone. The next step is performed by the anthrone oxygenase mdpH that catalyzes the oxidation of emodinanthrone to emodin. Emodin is further modified to yield monodictyphenone via several steps involving mdpB, mdpC mdpJ, mdpK and mdpL. These enzymes with xptA, xptB and xptC are also proposed to be involved in the synthesis of shamixanthone from emodin. Especially, direct reduction of emodin by the short chain dehydrogenase mdpC followed by dehydration catalyzed by the scytalone dehydratase-like protein mdpB gives loss of oxygen and formation of chrysophanol intermediate in two simple steps. The chain is Scytalone dehydratase-like protein mdpB from Emericella nidulans (strain FGSC A4 / ATCC 38163 / CBS 112.46 / NRRL 194 / M139) (Aspergillus nidulans).